The primary structure comprises 283 residues: Probable endonuclease 4 (283 aa).

Residues histidine 69, histidine 109, glutamate 145, aspartate 179, histidine 182, histidine 216, aspartate 229, histidine 231, and glutamate 261 each coordinate Zn(2+).

It belongs to the AP endonuclease 2 family. It depends on Zn(2+) as a cofactor.

The catalysed reaction is Endonucleolytic cleavage to 5'-phosphooligonucleotide end-products.. Endonuclease IV plays a role in DNA repair. It cleaves phosphodiester bonds at apurinic or apyrimidinic (AP) sites, generating a 3'-hydroxyl group and a 5'-terminal sugar phosphate. This chain is Probable endonuclease 4, found in Prosthecochloris aestuarii (strain DSM 271 / SK 413).